A 498-amino-acid chain; its full sequence is ATP synthase subunit beta, chloroplastic (498 aa).

172–179 is an ATP binding site; that stretch reads GGAGVGKT.

It belongs to the ATPase alpha/beta chains family. In terms of assembly, F-type ATPases have 2 components, CF(1) - the catalytic core - and CF(0) - the membrane proton channel. CF(1) has five subunits: alpha(3), beta(3), gamma(1), delta(1), epsilon(1). CF(0) has four main subunits: a(1), b(1), b'(1) and c(9-12).

The protein resides in the plastid. The protein localises to the chloroplast thylakoid membrane. It carries out the reaction ATP + H2O + 4 H(+)(in) = ADP + phosphate + 5 H(+)(out). Its function is as follows. Produces ATP from ADP in the presence of a proton gradient across the membrane. The catalytic sites are hosted primarily by the beta subunits. This chain is ATP synthase subunit beta, chloroplastic, found in Drimys granadensis.